The primary structure comprises 187 residues: UPF0301 protein lpl0620 (187 aa).

It belongs to the UPF0301 (AlgH) family.

This Legionella pneumophila (strain Lens) protein is UPF0301 protein lpl0620.